A 295-amino-acid polypeptide reads, in one-letter code: Inward rectifier potassium channel Kirbac3.1 (295 aa).

Residues 1 to 47 (MTGGMKPPARKPRILNSDGSSNITRLGLEKRGWLDDHYHDLLTVSWP) are Cytoplasmic-facing. The helical transmembrane segment at 48-69 (VFITLITGLYLVTNALFALAYL) threads the bilayer. Residues 70 to 82 (ACGDVIENARPGS) are Extracellular-facing. Residues 83–95 (FTDAFFFSVQTMA) constitute an intramembrane region (helical; Pore-forming). The short motif at 96 to 100 (TIGYG) is the Selectivity filter element. The chain crosses the membrane as a helical span at residues 107–131 (PLANTLVTLEALCGMLGLAVAASLI). At 132-295 (YARFTRPTAG…DLGKFHEIAQ (164 aa)) the chain is on the cytoplasmic side.

The protein belongs to the inward rectifier-type potassium channel (TC 1.A.2.1) family. KCNJ11 subfamily. As to quaternary structure, homotetramer.

The protein resides in the membrane. Its function is as follows. Inward rectifier potassium channel that mediates potassium uptake into the cell. Inward rectifier potassium channels are characterized by a greater tendency to allow potassium to flow into the cell rather than out of it. The inward rectification may be achieved by the blockage of outward current by cytoplasmic divalent metal ions and polyamines. Complements an E.coli mutant that is defective in K(+) uptake. In Paramagnetospirillum magnetotacticum (Aquaspirillum magnetotacticum), this protein is Inward rectifier potassium channel Kirbac3.1.